The following is a 126-amino-acid chain: UPF0538 protein C2orf76 (126 aa).

Belongs to the UPF0538 family.

This chain is UPF0538 protein C2orf76 (C2orf76), found in Homo sapiens (Human).